A 442-amino-acid polypeptide reads, in one-letter code: Cell division protein FtsA (442 aa).

It belongs to the FtsA/MreB family. Self-interacts. Interacts with FtsZ.

Its subcellular location is the cell inner membrane. Cell division protein that is involved in the assembly of the Z ring. May serve as a membrane anchor for the Z ring. In Rhizobium meliloti (strain 1021) (Ensifer meliloti), this protein is Cell division protein FtsA.